The primary structure comprises 447 residues: GTPase Der (447 aa).

EngA-type G domains are found at residues 3–167 (PVVA…NLPD) and 181–354 (IKLA…KSAT). GTP is bound by residues 9–16 (GRPNVGKS), 56–60 (DTGGF), 119–122 (NKAE), 187–194 (GRPNVGKS), 234–238 (DTAGL), and 299–302 (NKWD). The 85-residue stretch at 355-439 (RKMSTPVLTR…PLRIQFKSSQ (85 aa)) folds into the KH-like domain.

Belongs to the TRAFAC class TrmE-Era-EngA-EngB-Septin-like GTPase superfamily. EngA (Der) GTPase family. As to quaternary structure, associates with the 50S ribosomal subunit.

Its function is as follows. GTPase that plays an essential role in the late steps of ribosome biogenesis. This Variovorax paradoxus (strain S110) protein is GTPase Der.